We begin with the raw amino-acid sequence, 266 residues long: Phosphatidate cytidylyltransferase (266 aa).

8 helical membrane-spanning segments follow: residues 16-36 (VVLIVVAGLILYADNLLLFWA), 52-72 (LFQVKASFSLYLILVLSWVAA), 78-98 (PVECALISAMVMASVIAYQKA), 101-121 (SEAILPFLYPGVGFFALFGVY), 125-145 (GAVAIIWLLVVVVASDVGAFF), 164-184 (LEGALIGVVLASVLGSFVGMG), 186-206 (LSGGFLMALLFSFLIALMAVF), and 237-257 (LDSMLFGALSLHVLLYFLEIW).

It belongs to the CDS family.

The protein resides in the cell inner membrane. The catalysed reaction is a 1,2-diacyl-sn-glycero-3-phosphate + CTP + H(+) = a CDP-1,2-diacyl-sn-glycerol + diphosphate. It functions in the pathway phospholipid metabolism; CDP-diacylglycerol biosynthesis; CDP-diacylglycerol from sn-glycerol 3-phosphate: step 3/3. The protein is Phosphatidate cytidylyltransferase (cdsA) of Helicobacter pylori (strain J99 / ATCC 700824) (Campylobacter pylori J99).